A 157-amino-acid polypeptide reads, in one-letter code: Mini-ribonuclease 3 (157 aa).

Aspartate 18 is a catalytic residue. The disordered stretch occupies residues 126–157 (EEDEGKGKGETAKEEESITDALSPAEQSEIDC). Positions 130 to 141 (GKGKGETAKEEE) are enriched in basic and acidic residues.

The protein belongs to the MrnC RNase family. Homodimer. It depends on Mg(2+) as a cofactor.

The protein resides in the cytoplasm. Involved in correct processing of both the 5' and 3' ends of 23S rRNA precursor. Processes 30S rRNA precursor transcript even in absence of ribonuclease 3 (Rnc); Rnc processes 30S rRNA into smaller rRNA precursors. The sequence is that of Mini-ribonuclease 3 from Desulfitobacterium hafniense (strain Y51).